The following is a 390-amino-acid chain: Transforming growth factor beta-1 proprotein (390 aa).

Positions 1-29 are cleaved as a signal peptide; the sequence is MPPSGLRLLPLLLPLLWLLVLTPGRPAAG. The interval 30 to 74 is straightjacket domain; it reads LSTCKTIDMELVKRKRIEAIRGQILSKLRLASPPSQGDVPPGPLP. Residues 75-271 are arm domain; that stretch reads EAVLALYNST…ATPLERAQHL (197 aa). Residues N82, N136, and N176 are each glycosylated (N-linked (GlcNAc...) asparagine). Residues 226 to 252 are bowtie tail; it reads DSKDNTLHVEINGFNSGRRGDLATIHG. Positions 244–246 match the Cell attachment site motif; sequence RGD. Disulfide bonds link C285–C294, C293–C356, C322–C387, and C326–C389.

This sequence belongs to the TGF-beta family. In terms of assembly, homodimer; disulfide-linked. Interacts with the serine proteases, HTRA1 and HTRA3: the interaction with either inhibits TGFB1-mediated signaling and the HTRA protease activity is required for this inhibition. May interact with THSD4; this interaction may lead to sequestration by FBN1 microfibril assembly and attenuation of TGFB signaling. Interacts with CD109, DPT and ASPN. Interacts with EFEMP2. Interacts with TSKU; the interaction contributes to regulation of the hair cycle. Interacts with TGFBR3. Homodimer; disulfide-linked. Interacts with transforming growth factor beta-1 (TGF-beta-1) chain; interaction is non-covalent and maintains TGF-beta-1 in a latent state; each latency-associated peptide (LAP) monomer interacts with TGF-beta-1 in the other monomer. Interacts with LTBP1; leading to regulation of TGF-beta-1 activation. Interacts with LRRC32/GARP; leading to regulation of TGF-beta-1 activation on the surface of activated regulatory T-cells (Tregs). Interacts with LRRC33/NRROS; leading to regulation of TGF-beta-1 activation in macrophages and microglia. Interacts (via cell attachment site) with integrins ITGAV and ITGB6 (ITGAV:ITGB6), leading to release of the active TGF-beta-1. Interacts with NREP; the interaction results in a decrease in TGFB1 autoinduction. Interacts with HSP90AB1; inhibits latent TGFB1 activation. As to quaternary structure, homodimer; disulfide-linked. Interacts with TGF-beta receptors (TGFBR1 and TGFBR2), leading to signal transduction. Post-translationally, transforming growth factor beta-1 proprotein: The precursor proprotein is cleaved in the Golgi apparatus by FURIN to form Transforming growth factor beta-1 (TGF-beta-1) and Latency-associated peptide (LAP) chains, which remain non-covalently linked, rendering TGF-beta-1 inactive. N-glycosylated. Deglycosylation leads to activation of Transforming growth factor beta-1 (TGF-beta-1); mechanisms triggering deglycosylation-driven activation of TGF-beta-1 are however unclear.

The protein resides in the secreted. Its subcellular location is the extracellular space. It is found in the extracellular matrix. Transforming growth factor beta-1 proprotein: Precursor of the Latency-associated peptide (LAP) and Transforming growth factor beta-1 (TGF-beta-1) chains, which constitute the regulatory and active subunit of TGF-beta-1, respectively. Functionally, required to maintain the Transforming growth factor beta-1 (TGF-beta-1) chain in a latent state during storage in extracellular matrix. Associates non-covalently with TGF-beta-1 and regulates its activation via interaction with 'milieu molecules', such as LTBP1, LRRC32/GARP and LRRC33/NRROS, that control activation of TGF-beta-1. Interaction with LRRC33/NRROS regulates activation of TGF-beta-1 in macrophages and microglia. Interaction with LRRC32/GARP controls activation of TGF-beta-1 on the surface of activated regulatory T-cells (Tregs). Interaction with integrins (ITGAV:ITGB6 or ITGAV:ITGB8) results in distortion of the Latency-associated peptide chain and subsequent release of the active TGF-beta-1. In terms of biological role, multifunctional protein that regulates the growth and differentiation of various cell types and is involved in various processes, such as normal development, immune function, microglia function and responses to neurodegeneration. Activation into mature form follows different steps: following cleavage of the proprotein in the Golgi apparatus, Latency-associated peptide (LAP) and Transforming growth factor beta-1 (TGF-beta-1) chains remain non-covalently linked rendering TGF-beta-1 inactive during storage in extracellular matrix. At the same time, LAP chain interacts with 'milieu molecules', such as LTBP1, LRRC32/GARP and LRRC33/NRROS that control activation of TGF-beta-1 and maintain it in a latent state during storage in extracellular milieus. TGF-beta-1 is released from LAP by integrins (ITGAV:ITGB6 or ITGAV:ITGB8): integrin-binding to LAP stabilizes an alternative conformation of the LAP bowtie tail and results in distortion of the LAP chain and subsequent release of the active TGF-beta-1. Once activated following release of LAP, TGF-beta-1 acts by binding to TGF-beta receptors (TGFBR1 and TGFBR2), which transduce signal. While expressed by many cells types, TGF-beta-1 only has a very localized range of action within cell environment thanks to fine regulation of its activation by Latency-associated peptide chain (LAP) and 'milieu molecules'. Plays an important role in bone remodeling: acts as a potent stimulator of osteoblastic bone formation, causing chemotaxis, proliferation and differentiation in committed osteoblasts. Can promote either T-helper 17 cells (Th17) or regulatory T-cells (Treg) lineage differentiation in a concentration-dependent manner. At high concentrations, leads to FOXP3-mediated suppression of RORC and down-regulation of IL-17 expression, favoring Treg cell development. At low concentrations in concert with IL-6 and IL-21, leads to expression of the IL-17 and IL-23 receptors, favoring differentiation to Th17 cells. Stimulates sustained production of collagen through the activation of CREB3L1 by regulated intramembrane proteolysis (RIP). Mediates SMAD2/3 activation by inducing its phosphorylation and subsequent translocation to the nucleus. Positively regulates odontoblastic differentiation in dental papilla cells, via promotion of IPO7-mediated translocation of phosphorylated SMAD2 to the nucleus and subsequent transcription of target genes. Can induce epithelial-to-mesenchymal transition (EMT) and cell migration in various cell types. This is Transforming growth factor beta-1 proprotein (TGFB1) from Sus scrofa (Pig).